The chain runs to 593 residues: Brain-enriched guanylate kinase-associated protein (593 aa).

At Met1 the chain carries N-acetylmethionine. At Tyr137 the chain carries Phosphotyrosine. Phosphoserine occurs at positions 200, 229, 246, 265, 346, and 373. Arg381 carries the post-translational modification Asymmetric dimethylarginine. A phosphoserine mark is found at Ser455, Ser465, Ser475, Ser477, Ser500, Ser502, Ser506, Ser553, and Ser563. Residues 499-593 (LSLSPGRSAD…KAQLYGTLLN (95 aa)) form a disordered region.

In terms of assembly, interacts with DLG4 and DLGAP1 and forms a ternary complex.

It localises to the cytoplasm. The protein resides in the membrane. In terms of biological role, may sustain the structure of the postsynaptic density (PSD). The sequence is that of Brain-enriched guanylate kinase-associated protein (BEGAIN) from Homo sapiens (Human).